We begin with the raw amino-acid sequence, 5112 residues long: Malformin synthetase mlfA (5112 aa).

The adenylation 1 stretch occupies residues 225-616; sequence ERHAANRPHS…CGRADTQVKL (392 aa). In terms of domain architecture, Carrier 1 spans 757–830; sequence SRLEQEIQLA…EAASLAEVQE (74 aa). Residue Ser-791 is modified to O-(pantetheine 4'-phosphoryl)serine. Residues 868 to 1299 form a condensation 1 region; that stretch reads EDVFPCTTMQ…ALDSLTLLQA (432 aa). The segment at 1327–1716 is adenylation 2; the sequence is DRRVTRQPDT…GRKDTQVKLR (390 aa). One can recognise a Carrier 2 domain in the interval 1854–1931; the sequence is TAASELERTL…QLAAELGESP (78 aa). Ser-1891 carries the post-translational modification O-(pantetheine 4'-phosphoryl)serine. Disordered stretches follow at residues 1926-1961 and 1994-2034; these read ELGE…DGVD and GGSS…VPEP. Composition is skewed to low complexity over residues 1930 to 1941 and 1994 to 2012; these read SPRSSTSSASSS and GGSS…SSSS. Positions 2064–2479 are condensation 2; sequence EDIYPATALQ…AVSYSDKQTL (416 aa). The interval 2502 to 2894 is adenylation 3; it reads IRTPHAPAVC…IGRRDGQVKL (393 aa). The 77-residue stretch at 3030–3106 folds into the Carrier 3 domain; the sequence is RPTTAKECEM…QLLFHLRNAK (77 aa). Ser-3067 carries the O-(pantetheine 4'-phosphoryl)serine modification. 2 condensation regions span residues 3122 to 3586 and 3607 to 4044; these read WVDL…TYEQ and NIYP…EQLV. Residues 4069–4459 are adenylation 4; it reads HSSRQAVCAW…VGRKDNQIKF (391 aa). A Carrier 4 domain is found at 4593 to 4669; that stretch reads MPSTEAECIM…DLARHNSLVQ (77 aa). Ser-4630 carries the post-translational modification O-(pantetheine 4'-phosphoryl)serine. Positions 4724–5106 are condensation 5; the sequence is IVVDIPGRIS…VEKVVALLRD (383 aa).

It belongs to the NRP synthetase family.

The protein operates within secondary metabolite biosynthesis. Functionally, nonribosomal peptide synthetase; part of the gene cluster that mediates the biosynthesis of malformins, cyclic pentapeptides with a disulfide bond between 2 consecutive cysteins, that show potential anti-tumor as well as antimalarial and antitrypanosomal properties. The nonribosomal peptide synthetase mlfA is responsible of the formation of the cyclic pentapeptide. MlfA probably acts iteratively on one amino acid and possesses multiple amino acid specificities since it is involved in the biosynthesis of multiple malformins, including malformin C and malformin A2. Malformin C corresponds to a cyclo[D-Cys-D-Cys-Val-D-Leu-Val] pentapeptide whereas malformin A2 corresponds to a cyclo[D-Cys-D-Cys-Val-D-Leu-Ile] pentapeptide. The malformin biosynthesis clusters in malformin-producing fungi also contain enzymes involved in the formation of the disulfide bond between the two consecutive cysteins within malformins, in addition to additional tailoring enzymes such as methyltransferases or oxidoreductases. They are also composed of up to 4 major facilitator superfamily transporters, and transcription factors probably involved in the regulation of the expression of those clusters. In Aspergillus brasiliensis (strain CBS 101740 / IMI 381727 / IBT 21946), this protein is Malformin synthetase mlfA.